The chain runs to 309 residues: Potassium channel subfamily K member 16 (309 aa).

At 1–13 (MPSAGLCSCWGGR) the chain is on the cytoplasmic side. The chain crosses the membrane as a helical span at residues 14 to 34 (VLPLLLAYVCYLLLGATIFQL). Positions 98 to 116 (SFFFAGTVVTTIGYGNLAP) form an intramembrane region, pore-forming. 4 residues coordinate K(+): Thr108, Ile109, Gly110, and Tyr111. The segment at 108-113 (TIGYGN) is selectivity filter 1. Residues 120–140 (AGQVFCVFYALLGIPLNVIFL) form a helical membrane-spanning segment. The Cytoplasmic portion of the chain corresponds to 141-165 (NHLGTGLRAHLAAIERWEDRPRRSQ). Residues 166–186 (VLQVLGLALFLTLGTLVILIF) traverse the membrane as a helical segment. The pore-forming intramembrane region spans 202-221 (GFYFAFITLSTIGFGDYVVG). The K(+) site is built by Thr212, Ile213, Gly214, and Phe215. The segment at 212-217 (TIGFGD) is selectivity filter 2. A helical transmembrane segment spans residues 238-258 (IWILLGLAWLALILPLGPLLL). The Cytoplasmic portion of the chain corresponds to 259-309 (HRCCQLWLLSLRQGCGAKAAPGRRPRRGSTAARGVQVTPQDFPISKKGLGS).

Belongs to the two pore domain potassium channel (TC 1.A.1.8) family. Homodimer; disulfide-linked. Heterodimer with KCNK17 and KCNK5. Highly expressed in pancreas, in both endocrine (alpha, beta, gamma, delta, and epsilon) and exocrine (acinar and ductal) cells. Expressed in pacreatic beta-cells (at protein level). Expressed in pacreatic delta-cells (at protein level). Not detectable in the other tissues tested.

The protein resides in the endoplasmic reticulum membrane. The protein localises to the cell membrane. It is found in the mitochondrion inner membrane. The catalysed reaction is K(+)(in) = K(+)(out). The enzyme catalyses Rb(+)(in) = Rb(+)(out). It catalyses the reaction Cs(+)(in) = Cs(+)(out). With respect to regulation, the channel conductance is stimulated by extracellular alkaline pH. Inhibited by Ba(2+) ions, quinine, quinidine, chloroform and halothane. Its function is as follows. K(+) channel that conducts voltage-dependent outward rectifying currents upon membrane depolarization. Voltage sensing is coupled to K(+) electrochemical gradient in an 'ion flux gating' mode where outward but not inward ion flow opens the gate. Homo- and heterodimerizes to form functional channels with distinct regulatory and gating properties. In pancreatic islets, conducts K(+) countercurrents for Ca(2+) release from the endoplasmic reticulum (ER) and regulates the frequency and duration of cytosolic Ca(2+) oscillations coupled to secretion of pancreatic hormones. In pancreatic beta cells, drives ER Ca(2+) efflux, which in turn activates Ca(2+)-dependent plasma membrane K(+) slow currents and cytosolic Ca(2+) influx, overall contributing to synchronous cytosolic Ca(2+) oscillations. Limits glucose-induced cytosolic Ca(2+) oscillations coupled to second-phase INS secretion. Contributes to beta cell adaptation to acute inflammation by maintaining normal cytosolic Ca(2+) levels and INS secretion. May regulate beta cell mitochondrial Ca(2+) levels either indirectly via ER Ca(2+) efflux or directly by hyperpolarizing the mitochondrial membrane potential. Limits mitochondrial Ca(2+) oscillations and ATP production involved in glucose homeostasis upon metabolic stress. In pancreatic delta cells, limits Ca(2+)-induced Ca(2+)-release involved in somatostatin secretion and modulates islet paracrine signaling involved in glucagon secretion. Permeable to other monovalent cations such as Rb(+) and Cs(+). This is Potassium channel subfamily K member 16 from Homo sapiens (Human).